We begin with the raw amino-acid sequence, 213 residues long: Uridine kinase (213 aa).

15-22 (GASASGKS) lines the ATP pocket.

Belongs to the uridine kinase family.

It localises to the cytoplasm. The enzyme catalyses uridine + ATP = UMP + ADP + H(+). It catalyses the reaction cytidine + ATP = CMP + ADP + H(+). It functions in the pathway pyrimidine metabolism; CTP biosynthesis via salvage pathway; CTP from cytidine: step 1/3. Its pathway is pyrimidine metabolism; UMP biosynthesis via salvage pathway; UMP from uridine: step 1/1. This chain is Uridine kinase, found in Sodalis glossinidius (strain morsitans).